A 136-amino-acid chain; its full sequence is Histone H3 (136 aa).

The disordered stretch occupies residues 1–43; it reads MARTKQTARKSTGAKAPRKQLASKAARKSAPATGGIKKPHRFR. N6,N6,N6-trimethyllysine; alternate occurs at positions 5 and 10. N6,N6-dimethyllysine; alternate is present on Lys5. 2 positions are modified to N6-acetyllysine; alternate: Lys5 and Lys10. Lys5 is modified (N6-methyllysine; alternate). A Phosphoserine modification is found at Ser11. An N6-acetyllysine mark is found at Lys15, Lys19, and Lys24. 2 positions are modified to N6,N6,N6-trimethyllysine; alternate: Lys28 and Lys37. N6,N6-dimethyllysine; alternate is present on residues Lys28 and Lys37. Residues Lys28, Lys37, and Lys57 each carry the N6-acetyllysine; alternate modification. An N6-methyllysine; alternate mark is found at Lys28, Lys37, and Lys57. At Lys80 the chain carries N6-methyllysine.

It belongs to the histone H3 family. The nucleosome is a histone octamer containing two molecules each of H2A, H2B, H3 and H4 assembled in one H3-H4 heterotetramer and two H2A-H2B heterodimers. The octamer wraps approximately 147 bp of DNA. Post-translationally, phosphorylated to form H3S10ph. H3S10ph promotes subsequent H3K14ac formation by GCN5. H3S10ph is only found in the mitotically dividing MIC, but not in the amitotically dividing MAC. H3S10ph is correlated with chromosome condensation during mitotic or meiotic micronuclear divisions. Acetylation of histone H3 leads to transcriptional activation. H3K14ac formation by GCN5 is promoted by H3S10ph. H3K9acK14ac is the preferred acetylated form of newly synthesized H3. Acetylation occurs almost exclusively in the MAC. In terms of processing, methylated to form H3K4me. H3K4me is only found in the transcriptionally active MAC. Methylated to form H3K9me in developing MACs during conjugation, when genome-wide DNA elimination occurs. At this stage, H3K9me specifically occurs on DNA sequences being eliminated (IES), probably targeted by small scan RNAs (scnRNAs) bound to IES, and is required for efficient IES elimination. H3K9me is required for the interaction with the chromodomains of PDD1 and PDD3. Post-translationally, the full-length protein H3S (slow migrating) is converted to H3F (fast migrating) by proteolytic removal of the first 6 residues. H3F is unique to MIC, and processing seems to occur regularly each generation at a specific point in the cell cycle.

Its subcellular location is the nucleus. It is found in the chromosome. In terms of biological role, core component of nucleosome. Nucleosomes wrap and compact DNA into chromatin, limiting DNA accessibility to the cellular machineries which require DNA as a template. Histones thereby play a central role in transcription regulation, DNA repair, DNA replication and chromosomal stability. DNA accessibility is regulated via a complex set of post-translational modifications of histones, also called histone code, and nucleosome remodeling. This chain is Histone H3, found in Tetrahymena pyriformis.